A 397-amino-acid polypeptide reads, in one-letter code: Riboflavin biosynthesis protein RibBA (397 aa).

The DHBP synthase stretch occupies residues 1-199; it reads MFHRIEEALE…IEDLIAYRRH (199 aa). D-ribulose 5-phosphate-binding positions include 26–27, Asp31, 138–142, and Glu162; these read RE and RAGHT. Glu27 contributes to the Mg(2+) binding site. His141 is a binding site for Mg(2+). The tract at residues 200–397 is GTP cyclohydrolase II; it reads HETLVTREVE…VNKLGHLLNL (198 aa). Position 250–254 (250–254) interacts with GTP; the sequence is RVHSE. Positions 255, 266, and 268 each coordinate Zn(2+). Residues Gln271, 293–295, and Thr315 each bind GTP; that span reads EGR. Residue Asp327 is the Proton acceptor; for GTP cyclohydrolase activity of the active site. Arg329 serves as the catalytic Nucleophile; for GTP cyclohydrolase activity. GTP is bound by residues Thr350 and Lys355.

It in the N-terminal section; belongs to the DHBP synthase family. This sequence in the C-terminal section; belongs to the GTP cyclohydrolase II family. It depends on Mg(2+) as a cofactor. Mn(2+) is required as a cofactor. Requires Zn(2+) as cofactor.

The catalysed reaction is D-ribulose 5-phosphate = (2S)-2-hydroxy-3-oxobutyl phosphate + formate + H(+). It carries out the reaction GTP + 4 H2O = 2,5-diamino-6-hydroxy-4-(5-phosphoribosylamino)-pyrimidine + formate + 2 phosphate + 3 H(+). Its pathway is cofactor biosynthesis; riboflavin biosynthesis; 2-hydroxy-3-oxobutyl phosphate from D-ribulose 5-phosphate: step 1/1. It participates in cofactor biosynthesis; riboflavin biosynthesis; 5-amino-6-(D-ribitylamino)uracil from GTP: step 1/4. In terms of biological role, catalyzes the conversion of D-ribulose 5-phosphate to formate and 3,4-dihydroxy-2-butanone 4-phosphate. Catalyzes the conversion of GTP to 2,5-diamino-6-ribosylamino-4(3H)-pyrimidinone 5'-phosphate (DARP), formate and pyrophosphate. This is Riboflavin biosynthesis protein RibBA from Bacillus cereus (strain ATCC 10987 / NRS 248).